Reading from the N-terminus, the 110-residue chain is Thiosulfate sulfurtransferase GlpE (110 aa).

Residues R17–S105 form the Rhodanese domain. Catalysis depends on C65, which acts as the Cysteine persulfide intermediate.

The protein belongs to the GlpE family.

The protein localises to the cytoplasm. The catalysed reaction is thiosulfate + hydrogen cyanide = thiocyanate + sulfite + 2 H(+). It catalyses the reaction thiosulfate + [thioredoxin]-dithiol = [thioredoxin]-disulfide + hydrogen sulfide + sulfite + 2 H(+). In terms of biological role, transferase that catalyzes the transfer of sulfur from thiosulfate to thiophilic acceptors such as cyanide or dithiols. May function in a CysM-independent thiosulfate assimilation pathway by catalyzing the conversion of thiosulfate to sulfite, which can then be used for L-cysteine biosynthesis. The chain is Thiosulfate sulfurtransferase GlpE from Pseudomonas aeruginosa (strain ATCC 15692 / DSM 22644 / CIP 104116 / JCM 14847 / LMG 12228 / 1C / PRS 101 / PAO1).